Reading from the N-terminus, the 552-residue chain is MVDMGGLDNLIANTAYLQARKSSDADSKELQRRRRSLMLPGPQSCEQLRQALATDFHSLCEQQPIGRRLFRDFLATVPAYQEARGFLEEVQSWELAEEGPAKGSALQGLVTTCAAAPVPGRPHPFFSPALVTKCQAATTDDDRASLVELAKAEVMAFLQDQPFREFLASPFYDKFLQWKVFEMQPVSDKYFEEFRVLGKGGFGEVCAVQVKNTGKMYACKKLDKKRLKKKNGEKMALLEKEILERVSSPFIVSLAYAFESKSHLCLVMSLMNGGDLKFHIYSVGEPGLDMSRVIFYSAQITCGVLHLHSLGIVYRDMKPENVLLDDLGNCRLSDLGLAVQIQDGKPITQRAGTNGYMAPEILMEKASYSYPVDWFAMGCSIYEMVAGRTPFRDYKEKVSKEDLKQRTLKEEVRFQHSNFTEEAKDICRLFLAKTPEQRLGSREKSDDPRKHHFFKTINFPRLEAGLVEPPFVPDPSVVYAKDINEIDDFSEVRGVEFDDNDKQFFQRFATGAVPIAWQEEIIETGPFAELNDPNRPAGCGEGSSRSGVCLLL.

Position 36 is a phosphoserine; by PKA (S36). The region spanning 56-176 (FHSLCEQQPI…LASPFYDKFL (121 aa)) is the RGS domain. A Protein kinase domain is found at 191-454 (FEEFRVLGKG…SDDPRKHHFF (264 aa)). Residues 197 to 205 (LGKGGFGEV) and K220 contribute to the ATP site. The active-site Proton acceptor is the D316. The region spanning 455–520 (KTINFPRLEA…GAVPIAWQEE (66 aa)) is the AGC-kinase C-terminal domain. C549 bears the Cysteine methyl ester mark. C549 is lipidated: S-geranylgeranyl cysteine. A propeptide spans 550 to 552 (LLL) (removed in mature form).

This sequence belongs to the protein kinase superfamily. AGC Ser/Thr protein kinase family. GPRK subfamily. As to quaternary structure, interacts (when prenylated) with PDE6D; this promotes release from membranes. In terms of processing, autophosphorylated in vitro at Ser-490. Phosphorylation at Ser-36 is regulated by light and activated by cAMP.

It localises to the membrane. It catalyses the reaction L-threonyl-[rhodopsin] + ATP = O-phospho-L-threonyl-[rhodopsin] + ADP + H(+). The enzyme catalyses L-seryl-[rhodopsin] + ATP = O-phospho-L-seryl-[rhodopsin] + ADP + H(+). Its activity is regulated as follows. Inhibited by phosphorylation of Ser-36. Retina-specific kinase involved in the shutoff of the photoresponse and adaptation to changing light conditions via cone opsin phosphorylation, including rhodopsin (RHO). The polypeptide is Rhodopsin kinase GRK7 (GRK7) (Bos taurus (Bovine)).